We begin with the raw amino-acid sequence, 226 residues long: UPF0173 metal-dependent hydrolase TM_1162 (226 aa).

Belongs to the UPF0173 family.

The sequence is that of UPF0173 metal-dependent hydrolase TM_1162 from Thermotoga maritima (strain ATCC 43589 / DSM 3109 / JCM 10099 / NBRC 100826 / MSB8).